We begin with the raw amino-acid sequence, 104 residues long: Large ribosomal subunit protein eL31 (104 aa).

The protein belongs to the eukaryotic ribosomal protein eL31 family.

The chain is Large ribosomal subunit protein eL31 (rpl31e) from Aeropyrum pernix (strain ATCC 700893 / DSM 11879 / JCM 9820 / NBRC 100138 / K1).